Here is a 452-residue protein sequence, read N- to C-terminus: Tubulin alpha-1D chain (452 aa).

An MREC motif motif is present at residues 1–4; sequence MREC. A GTP-binding site is contributed by Q11. K40 is subject to N6-acetyllysine. E71, S140, G144, T145, T179, N206, and N228 together coordinate GTP. E71 contributes to the Mg(2+) binding site. The active site involves E254. The residue at position 282 (Y282) is a 3'-nitrotyrosine. The segment at 432 to 452 is disordered; sequence YEEVGMDSVEGEGEEEEGDEY. S439 carries the phosphoserine modification. At E446 the chain carries 5-glutamyl polyglutamate. 3'-nitrotyrosine is present on Y452.

It belongs to the tubulin family. As to quaternary structure, dimer of alpha and beta chains. A typical microtubule is a hollow water-filled tube with an outer diameter of 25 nm and an inner diameter of 15 nM. Alpha-beta heterodimers associate head-to-tail to form protofilaments running lengthwise along the microtubule wall with the beta-tubulin subunit facing the microtubule plus end conferring a structural polarity. Microtubules usually have 13 protofilaments but different protofilament numbers can be found in some organisms and specialized cells. Mg(2+) is required as a cofactor. Some glutamate residues at the C-terminus are polyglycylated, resulting in polyglycine chains on the gamma-carboxyl group. Glycylation is mainly limited to tubulin incorporated into axonemes (cilia and flagella) whereas glutamylation is prevalent in neuronal cells, centrioles, axonemes, and the mitotic spindle. Both modifications can coexist on the same protein on adjacent residues, and lowering polyglycylation levels increases polyglutamylation, and reciprocally. Cilia and flagella glycylation is required for their stability and maintenance. Flagella glycylation controls sperm motility. In terms of processing, some glutamate residues at the C-terminus are polyglutamylated, resulting in polyglutamate chains on the gamma-carboxyl group. Polyglutamylation plays a key role in microtubule severing by spastin (SPAST). SPAST preferentially recognizes and acts on microtubules decorated with short polyglutamate tails: severing activity by SPAST increases as the number of glutamates per tubulin rises from one to eight, but decreases beyond this glutamylation threshold. Glutamylation is also involved in cilia motility. Post-translationally, acetylation of alpha chains at Lys-40 is located inside the microtubule lumen. This modification has been correlated with increased microtubule stability, intracellular transport and ciliary assembly. Methylation of alpha chains at Lys-40 is found in mitotic microtubules and is required for normal mitosis and cytokinesis contributing to genomic stability. In terms of processing, nitration of Tyr-452 is irreversible and interferes with normal dynein intracellular distribution. Post-translationally, undergoes a tyrosination/detyrosination cycle, the cyclic removal and re-addition of a C-terminal tyrosine residue by the enzymes tubulin tyrosine carboxypeptidase (MATCAP, VASH1 or VASH2) and tubulin tyrosine ligase (TTL), respectively. Tyrosination promotes microtubule interaction with CAP-Gly domain-containing proteins such as CLIP1, CLIP2 and DCTN1. Tyrosination regulates the initiation of dynein-dynactin motility via interaction with DCTN1, which brings the dynein-dynactin complex into contact with microtubules. In neurons, tyrosinated tubulins mediate the initiation of retrograde vesicle transport. In terms of processing, detyrosination is involved in metaphase plate congression by guiding chromosomes during mitosis: detyrosination promotes interaction with CENPE, promoting pole-proximal transport of chromosomes toward the equator. Detyrosination increases microtubules-dependent mechanotransduction in dystrophic cardiac and skeletal muscle. In cardiomyocytes, detyrosinated microtubules are required to resist to contractile compression during contraction: detyrosination promotes association with desmin (DES) at force-generating sarcomeres, leading to buckled microtubules and mechanical resistance to contraction.

The protein resides in the cytoplasm. It localises to the cytoskeleton. The enzyme catalyses GTP + H2O = GDP + phosphate + H(+). Its function is as follows. Tubulin is the major constituent of microtubules, a cylinder consisting of laterally associated linear protofilaments composed of alpha- and beta-tubulin heterodimers. Microtubules grow by the addition of GTP-tubulin dimers to the microtubule end, where a stabilizing cap forms. Below the cap, tubulin dimers are in GDP-bound state, owing to GTPase activity of alpha-tubulin. This chain is Tubulin alpha-1D chain (TUBA1D), found in Bos taurus (Bovine).